The sequence spans 470 residues: E3 SUMO-protein ligase EGR2 (470 aa).

Low complexity predominate over residues 126–141 (PPASTTASSSVTSASP). 3 disordered regions span residues 126 to 153 (PPAS…GVCT), 159 to 178 (PELD…SGCT), and 185 to 210 (PSAF…SYPS). Residues 190 to 202 (SPPSTTSTSSLAY) are compositionally biased toward low complexity. The residue at position 247 (Lys-247) is an N6-acetyllysine; by EP300. The segment covering 275–291 (GPGAGVTGPGASGGGEG) has biased composition (gly residues). The interval 275-345 (GPGAGVTGPG…PYPCPAEGCD (71 aa)) is disordered. 3 consecutive C2H2-type zinc fingers follow at residues 337-361 (YPCP…IRIH), 367-389 (FQCR…IRTH), and 395-417 (FACD…TKIH). The tract at residues 408-470 (DERKRHTKIH…ASCTSRTRTP (63 aa)) is disordered. The segment covering 412–422 (RHTKIHLRQKE) has biased composition (basic residues). The segment covering 426–439 (SAPSAPPSAQSSAS) has biased composition (low complexity). The span at 440–450 (GPGGSQAGGSL) shows a compositional bias: gly residues.

The protein belongs to the EGR C2H2-type zinc-finger protein family. In terms of assembly, interacts with HCFC1. Interacts with WWP2. Interacts with UBC9. Interacts with CITED1. Interacts (via phosphorylated form) with SFN. Ubiquitinated by WWP2 leading to proteasomal degradation. In terms of processing, acetylated at Lys-247. May be deacetylated by HDAC6, HDAC10 or SIRT1. In terms of tissue distribution, expressed mainly in the thymus.

Its subcellular location is the nucleus. Its pathway is protein modification; protein sumoylation. Functionally, sequence-specific DNA-binding transcription factor. Plays a role in hindbrain segmentation by regulating the expression of a subset of homeobox containing genes and in Schwann cell myelination by regulating the expression of genes involved in the formation and maintenance of myelin. Binds to two EGR2-consensus sites EGR2A (5'-CTGTAGGAG-3') and EGR2B (5'-ATGTAGGTG-3') in the HOXB3 enhancer and promotes HOXB3 transcriptional activation. Binds to specific DNA sites located in the promoter region of HOXA4, HOXB2 and ERBB2. Regulates hindbrain segmentation by controlling the expression of Hox genes, such as HOXA4, HOXB3 and HOXB2, and thereby specifying odd and even rhombomeres. Promotes the expression of HOXB3 in the rhombomere r5 and of HOXB3 in r3 and r5 in the hindbrain. Regulates myelination in the peripheral nervous system after birth, possibly by regulating the expression of myelin proteins, such as MPZ, and by promoting the differentiation of Schwann cells. Involved in the development of the jaw openener musculature, probably by playing a role in its innervation through trigeminal motor neurons. May play a role in adipogenesis, possibly by regulating the expression of CEBPB. Its function is as follows. E3 SUMO-protein ligase helping SUMO1 conjugation to its coregulators NAB1 and NAB2, whose sumoylation down-regulates EGR2 transcriptional activity. This Mus musculus (Mouse) protein is E3 SUMO-protein ligase EGR2 (Egr2).